The sequence spans 140 residues: uncharacterized protein (140 aa).

The protein belongs to the MG439/MG440 family.

This is an uncharacterized protein from Mycoplasma pneumoniae (strain ATCC 29342 / M129 / Subtype 1) (Mycoplasmoides pneumoniae).